The sequence spans 392 residues: DNA-directed RNA polymerase subunit Rpo1C (392 aa).

It belongs to the RNA polymerase beta' chain family. In terms of assembly, part of the RNA polymerase complex.

The protein resides in the cytoplasm. It carries out the reaction RNA(n) + a ribonucleoside 5'-triphosphate = RNA(n+1) + diphosphate. In terms of biological role, DNA-dependent RNA polymerase (RNAP) catalyzes the transcription of DNA into RNA using the four ribonucleoside triphosphates as substrates. Forms part of the jaw domain. This is DNA-directed RNA polymerase subunit Rpo1C from Metallosphaera sedula (strain ATCC 51363 / DSM 5348 / JCM 9185 / NBRC 15509 / TH2).